The following is a 179-amino-acid chain: Adenine phosphoribosyltransferase (179 aa).

It belongs to the purine/pyrimidine phosphoribosyltransferase family. As to quaternary structure, homodimer.

It is found in the cytoplasm. The catalysed reaction is AMP + diphosphate = 5-phospho-alpha-D-ribose 1-diphosphate + adenine. It functions in the pathway purine metabolism; AMP biosynthesis via salvage pathway; AMP from adenine: step 1/1. Catalyzes a salvage reaction resulting in the formation of AMP, that is energically less costly than de novo synthesis. This is Adenine phosphoribosyltransferase from Nitrobacter hamburgensis (strain DSM 10229 / NCIMB 13809 / X14).